The chain runs to 474 residues: Tryptophan biosynthesis protein TrpCF (474 aa).

Residues 1–262 are indole-3-glycerol phosphate synthase; it reads MTSNNLPTVL…LAARELVYGP (262 aa). Positions 263–474 are N-(5'-phosphoribosyl)anthranilate isomerase; that stretch reads NKVCGLTSPS…IFATISTFHY (212 aa).

It in the N-terminal section; belongs to the TrpC family. This sequence in the C-terminal section; belongs to the TrpF family. As to quaternary structure, monomer.

It catalyses the reaction N-(5-phospho-beta-D-ribosyl)anthranilate = 1-(2-carboxyphenylamino)-1-deoxy-D-ribulose 5-phosphate. It carries out the reaction 1-(2-carboxyphenylamino)-1-deoxy-D-ribulose 5-phosphate + H(+) = (1S,2R)-1-C-(indol-3-yl)glycerol 3-phosphate + CO2 + H2O. Its pathway is amino-acid biosynthesis; L-tryptophan biosynthesis; L-tryptophan from chorismate: step 3/5. It functions in the pathway amino-acid biosynthesis; L-tryptophan biosynthesis; L-tryptophan from chorismate: step 4/5. Its function is as follows. Bifunctional enzyme that catalyzes two sequential steps of tryptophan biosynthetic pathway. The first reaction is catalyzed by the isomerase, coded by the TrpF domain; the second reaction is catalyzed by the synthase, coded by the TrpC domain. This Corynebacterium glutamicum (strain ATCC 13032 / DSM 20300 / JCM 1318 / BCRC 11384 / CCUG 27702 / LMG 3730 / NBRC 12168 / NCIMB 10025 / NRRL B-2784 / 534) protein is Tryptophan biosynthesis protein TrpCF (trpC).